Consider the following 205-residue polypeptide: Thymidine kinase (205 aa).

Residues 9–16 and 87–90 each bind ATP; these read SAMNAGKS and DESQ. Glutamate 88 acts as the Proton acceptor in catalysis. Zn(2+) is bound by residues cysteine 145, cysteine 147, cysteine 182, and histidine 185.

It belongs to the thymidine kinase family. As to quaternary structure, homotetramer.

The protein resides in the cytoplasm. It catalyses the reaction thymidine + ATP = dTMP + ADP + H(+). In Salmonella paratyphi A (strain ATCC 9150 / SARB42), this protein is Thymidine kinase.